The sequence spans 809 residues: Spindle pole body component alp14 (809 aa).

HEAT repeat units lie at residues D127–A164 and I167–D204. 3 disordered regions span residues P233–Q274, A507–L608, and E619–H638. The span at F239–T253 shows a compositional bias: polar residues. The span at E262–Q274 shows a compositional bias: acidic residues. Residues A509–P518 show a composition bias toward basic residues. 2 stretches are compositionally biased toward low complexity: residues V526–K551 and S582–Q595. Phosphoserine occurs at positions 543 and 548. Polar residues predominate over residues V597–L608. The stretch at E637–S697 forms a coiled coil. A phosphoserine mark is found at S697 and S720.

Belongs to the TOG/XMAP215 family. As to quaternary structure, interacts with alp14.

It is found in the cytoplasm. The protein localises to the cytoskeleton. It localises to the microtubule organizing center. Its subcellular location is the spindle pole body. The protein resides in the chromosome. It is found in the centromere. The protein localises to the kinetochore. In terms of biological role, required for bipolar spindle formation and proper chromosome segregation. Has a role in connecting the kinetochores and the plus end of pole to chromosome microtubules. Also required for the activation of the spindle checkpoint pathway. This is Spindle pole body component alp14 (alp14) from Schizosaccharomyces pombe (strain 972 / ATCC 24843) (Fission yeast).